The primary structure comprises 351 residues: Anthranilate phosphoribosyltransferase (351 aa).

Residues glycine 80, 83–84 (GD), threonine 88, 90–93 (NVST), 108–116 (KHGNRSVTS), and serine 120 contribute to the 5-phospho-alpha-D-ribose 1-diphosphate site. Anthranilate is bound at residue glycine 80. Serine 92 contacts Mg(2+). An anthranilate-binding site is contributed by asparagine 111. Arginine 166 is a binding site for anthranilate. Mg(2+) contacts are provided by aspartate 229 and glutamate 230.

It belongs to the anthranilate phosphoribosyltransferase family. In terms of assembly, homodimer. Requires Mg(2+) as cofactor.

It catalyses the reaction N-(5-phospho-beta-D-ribosyl)anthranilate + diphosphate = 5-phospho-alpha-D-ribose 1-diphosphate + anthranilate. Its pathway is amino-acid biosynthesis; L-tryptophan biosynthesis; L-tryptophan from chorismate: step 2/5. Functionally, catalyzes the transfer of the phosphoribosyl group of 5-phosphorylribose-1-pyrophosphate (PRPP) to anthranilate to yield N-(5'-phosphoribosyl)-anthranilate (PRA). This chain is Anthranilate phosphoribosyltransferase, found in Prosthecochloris aestuarii (strain DSM 271 / SK 413).